We begin with the raw amino-acid sequence, 379 residues long: MELVEVLEGKAKILTPKAESIYDAPVFYNPRMALNRDIAVVLLNVLKPRIVLDALSATGIRGIRFALETPAEEIWMNDISEDAYNLMKKNVLLNFKGELEESNGRAVLKSEKTLVVNHDDANRLMAEKHRYFHFIDLDPFGSPMEFLDTALRSVKRKGILGITATDGAPLCGAHPKACMRKYLAVPLRGELCHEVGTRILVGVVARYAAKYDLGIEVILAYYKDHYFRAFIKLKDGARKGDESLENLGYIYFDESTGKFEVERSFLPSKPNAYGPVWLGPLKSQEIVEEMLEISQQLSLARKKQAVKLLKILKDELDVPLFYDTHGLGRRLKIEARKIEEIINELRSLGYRASRTHFSPTGVKTDAPYEVFVNVLSSAK.

Residues Val4–Leu375 enclose the Trm1 methyltransferase domain. Residues Arg36, Arg61, Asp78, Asp120, and Ala121 each coordinate S-adenosyl-L-methionine.

It belongs to the class I-like SAM-binding methyltransferase superfamily. Trm1 family.

It carries out the reaction guanosine(26) in tRNA + 2 S-adenosyl-L-methionine = N(2)-dimethylguanosine(26) in tRNA + 2 S-adenosyl-L-homocysteine + 2 H(+). Dimethylates a single guanine residue at position 26 of a number of tRNAs using S-adenosyl-L-methionine as donor of the methyl groups. The sequence is that of tRNA (guanine(26)-N(2))-dimethyltransferase from Pyrococcus abyssi (strain GE5 / Orsay).